We begin with the raw amino-acid sequence, 404 residues long: CCA-adding enzyme (404 aa).

2 residues coordinate ATP: glycine 27 and arginine 30. Residues glycine 27 and arginine 30 each coordinate CTP. Positions 40 and 42 each coordinate Mg(2+). ATP contacts are provided by arginine 111, aspartate 154, arginine 157, arginine 160, and arginine 163. Arginine 111, aspartate 154, arginine 157, arginine 160, and arginine 163 together coordinate CTP.

Belongs to the tRNA nucleotidyltransferase/poly(A) polymerase family. Bacterial CCA-adding enzyme type 3 subfamily. In terms of assembly, homodimer. Mg(2+) is required as a cofactor.

It carries out the reaction a tRNA precursor + 2 CTP + ATP = a tRNA with a 3' CCA end + 3 diphosphate. The enzyme catalyses a tRNA with a 3' CCA end + 2 CTP + ATP = a tRNA with a 3' CCACCA end + 3 diphosphate. Catalyzes the addition and repair of the essential 3'-terminal CCA sequence in tRNAs without using a nucleic acid template. Adds these three nucleotides in the order of C, C, and A to the tRNA nucleotide-73, using CTP and ATP as substrates and producing inorganic pyrophosphate. tRNA 3'-terminal CCA addition is required both for tRNA processing and repair. Also involved in tRNA surveillance by mediating tandem CCA addition to generate a CCACCA at the 3' terminus of unstable tRNAs. While stable tRNAs receive only 3'-terminal CCA, unstable tRNAs are marked with CCACCA and rapidly degraded. This Geobacillus sp. (strain WCH70) protein is CCA-adding enzyme.